Here is a 133-residue protein sequence, read N- to C-terminus: MADRIELRGLTVHGRHGVYDHERVAGQRFVIDVTVWIDLAEAANSDDLADTYDYVRLASRAAEIVAGPPRKLIETVGAEIADHVMDDQRVHAVEVAVHKPQAPIPQTFDDVAVVIRRSRRGGRGWVVPAGGAV.

Residues E22, Y54, and 73 to 74 (IE) contribute to the substrate site. The active-site Proton donor/acceptor is the K99.

It belongs to the DHNA family.

It carries out the reaction 7,8-dihydroneopterin = 6-hydroxymethyl-7,8-dihydropterin + glycolaldehyde. The catalysed reaction is 7,8-dihydroneopterin = 7,8-dihydromonapterin. It catalyses the reaction 7,8-dihydroneopterin + O2 = 7,8-dihydroxanthopterin + glycolaldehyde + formate + H(+). It functions in the pathway cofactor biosynthesis; tetrahydrofolate biosynthesis; 2-amino-4-hydroxy-6-hydroxymethyl-7,8-dihydropteridine diphosphate from 7,8-dihydroneopterin triphosphate: step 3/4. In terms of biological role, catalyzes the conversion of 7,8-dihydroneopterin to 6-hydroxymethyl-7,8-dihydropterin, 7,8-dihydromonapterin and 7,8-dihydroxanthopterin, respectively, in equal quantities. After longer incubation times the only product is 6-hydroxymethyl-7,8-dihydropterin. In Mycobacterium tuberculosis (strain CDC 1551 / Oshkosh), this protein is Dihydroneopterin aldolase (folB).